An 85-amino-acid chain; its full sequence is Neutrophil elastase 2A (85 aa).

In terms of domain architecture, Peptidase S1 spans 1-85 (IVGGRAAEPH…VAQGVFSFVR (85 aa)). Ser-67 functions as the Charge relay system in the catalytic mechanism.

The protein belongs to the peptidase S1 family. Elastase subfamily.

Its function is as follows. May be involved in the degradation of connective tissue in chronic lung disease. The protein is Neutrophil elastase 2A of Equus caballus (Horse).